Here is a 394-residue protein sequence, read N- to C-terminus: Elongation factor Tu (394 aa).

The tr-type G domain maps to 10–205 (KPHVNIGTIG…VDTWIPLPPR (196 aa)). Residues 19 to 26 (GHVDHGKT) form a G1 region. Residue 19-26 (GHVDHGKT) coordinates GTP. T26 is a Mg(2+) binding site. The segment at 60–64 (GITIN) is G2. The tract at residues 81-84 (DCPG) is G3. GTP-binding positions include 81–85 (DCPGH) and 136–139 (NKCD). The G4 stretch occupies residues 136–139 (NKCD). Residues 174 to 176 (SAL) form a G5 region.

It belongs to the TRAFAC class translation factor GTPase superfamily. Classic translation factor GTPase family. EF-Tu/EF-1A subfamily. As to quaternary structure, monomer.

The protein resides in the cytoplasm. The catalysed reaction is GTP + H2O = GDP + phosphate + H(+). Functionally, GTP hydrolase that promotes the GTP-dependent binding of aminoacyl-tRNA to the A-site of ribosomes during protein biosynthesis. This is Elongation factor Tu from Phocaeicola vulgatus (strain ATCC 8482 / DSM 1447 / JCM 5826 / CCUG 4940 / NBRC 14291 / NCTC 11154) (Bacteroides vulgatus).